A 256-amino-acid chain; its full sequence is uncharacterized protein (256 aa).

Positions 10–64 (IRALRESRDWSLADLAAATGVSTMGLSYLERGARKPHKSTVQKVENGLGLPPGTY) constitute an HTH cro/C1-type domain. The segment at residues 21 to 40 (LADLAAATGVSTMGLSYLER) is a DNA-binding region (H-T-H motif).

This is an uncharacterized protein from Mycobacterium bovis (strain ATCC BAA-935 / AF2122/97).